Here is a 135-residue protein sequence, read N- to C-terminus: Class I hydrophobin dewB (135 aa).

The first 17 residues, 1–17 (MKFIGLATLSLFALASA), serve as a signal peptide directing secretion. Disulfide bonds link cysteine 35/cysteine 109, cysteine 43/cysteine 103, cysteine 44/cysteine 84, and cysteine 110/cysteine 128.

The protein belongs to the fungal hydrophobin family. In terms of assembly, self-assembles to form functional amyloid fibrils called rodlets. Self-assembly into fibrillar rodlets occurs spontaneously at hydrophobic:hydrophilic interfaces and the rodlets further associate laterally to form amphipathic monolayers.

It is found in the secreted. It localises to the spore wall. Its function is as follows. Aerial growth, conidiation, and dispersal of filamentous fungi in the environment rely upon a capability of their secreting small amphipathic proteins called hydrophobins (HPBs) with low sequence identity. Class I can self-assemble into an outermost layer of rodlet bundles on aerial cell surfaces, conferring cellular hydrophobicity that supports fungal growth, development and dispersal; whereas Class II form highly ordered films at water-air interfaces through intermolecular interactions but contribute nothing to the rodlet structure. DewB is a class I hydrophobin that contributes to the hydrophobicity of the spore surface. This Emericella nidulans (strain FGSC A4 / ATCC 38163 / CBS 112.46 / NRRL 194 / M139) (Aspergillus nidulans) protein is Class I hydrophobin dewB.